The following is a 227-amino-acid chain: Cytidylate kinase (227 aa).

G12–T20 is a binding site for ATP.

It belongs to the cytidylate kinase family. Type 1 subfamily.

It is found in the cytoplasm. It carries out the reaction CMP + ATP = CDP + ADP. The catalysed reaction is dCMP + ATP = dCDP + ADP. The chain is Cytidylate kinase from Enterobacter sp. (strain 638).